The following is a 532-amino-acid chain: MADGGSGMCWCLRRCGKNQEVLLLPDGEEVTMGRGLGVTYQLKPTLCPLMISRTHCLFKQNARDEWTVTDNKSLNGVWRNKERLEPHKAYTLSEGTLIQLGVPPPNMESAEFEYILVREHLDKVSGSLIRPLPGKTKATRTKRKFPSEDADASGNEGPSNFSIPKFCRVSRDGEDSAKSLRTSHKQPKASGVEPELNDSVETDTVSPTQQQCCRSTLQLSRVRETMEEIRRLNVQIQEKQIKMQEKLNHPQESQLGSNSYLVVQKELQALRNQLSNEQEQHLQSVKELKEIFQEEQQSMGSQKQAEEEHLKEQLAQALQEHTQLMQELNRNKNDFEQIIQAKNKELQETKEEKEKVCAQKEEVLNHMNDVLDNELQCIICSEHFIEAVTLNCAHSFCSYCIKSWRKRKEECPICRQEILSETRSLVLDNCIDSMVDKLSPEMKNRRAALILERKEMVQAEESNPVLVVSDSSSFLSDTFYISSSSSDSDELGSDFWMVNEEEEYEESLFGCGTDELDSSDFESDDDDSFLIV.

The FHA domain occupies 30-84; it reads VTMGRGLGVTYQLKPTLCPLMISRTHCLFKQNARDEWTVTDNKSLNGVWRNKERL. Residues 127-209 form a disordered region; the sequence is SLIRPLPGKT…VETDTVSPTQ (83 aa). Residues 169-178 show a composition bias toward basic and acidic residues; the sequence is VSRDGEDSAK. An RING-type zinc finger spans residues 377 to 415; sequence CIICSEHFIEAVTLNCAHSFCSYCIKSWRKRKEECPICR.

This sequence belongs to the RNF8 family. Homodimer. Forms a E2-E3 ubiquitin ligase complex composed of the rnf8 homodimer and a E2 heterodimer of ube2n and ube2v2.

It localises to the nucleus. It carries out the reaction S-ubiquitinyl-[E2 ubiquitin-conjugating enzyme]-L-cysteine + [acceptor protein]-L-lysine = [E2 ubiquitin-conjugating enzyme]-L-cysteine + N(6)-ubiquitinyl-[acceptor protein]-L-lysine.. Its pathway is protein modification; protein ubiquitination. E3 ubiquitin-protein ligase that plays a key role in DNA damage signaling via 2 distinct roles: by mediating the 'Lys-63'-linked ubiquitination of histones H2A and H2AX and promoting the recruitment of DNA repair proteins at double-strand breaks (DSBs) sites, and by catalyzing 'Lys-48'-linked ubiquitination to remove target proteins from DNA damage sites. Following DNA DSBs, it is recruited to the sites of damage by ATM-phosphorylated mdc1 and catalyzes the 'Lys-63'-linked ubiquitination of histones H2A and H2AX, thereby promoting the formation of tp53bp1 and brca1 ionizing radiation-induced foci (IRIF). H2A ubiquitination also mediates the ATM-dependent transcriptional silencing at regions flanking DSBs in cis, a mechanism to avoid collision between transcription and repair intermediates. Also catalyzes the formation of 'Lys-48'-linked polyubiquitin chains, leading to degradation of substrate proteins. In addition to its function in damage signaling, also plays a role in higher-order chromatin structure by mediating extensive chromatin decondensation. The chain is E3 ubiquitin-protein ligase rnf8-B from Xenopus laevis (African clawed frog).